Reading from the N-terminus, the 262-residue chain is Shikimate dehydrogenase (NADP(+)) (262 aa).

Residues 15–17 (SRS) and Thr62 contribute to the shikimate site. The active-site Proton acceptor is the Lys66. Glu78 contacts NADP(+). Shikimate contacts are provided by Asn87 and Asp102. Residues 126-130 (GAGGA), 150-155 (NRTLAR), and Met214 each bind NADP(+). Shikimate is bound at residue Tyr216. Gly236 contacts NADP(+).

The protein belongs to the shikimate dehydrogenase family. As to quaternary structure, homodimer.

The enzyme catalyses shikimate + NADP(+) = 3-dehydroshikimate + NADPH + H(+). Its pathway is metabolic intermediate biosynthesis; chorismate biosynthesis; chorismate from D-erythrose 4-phosphate and phosphoenolpyruvate: step 4/7. Functionally, involved in the biosynthesis of the chorismate, which leads to the biosynthesis of aromatic amino acids. Catalyzes the reversible NADPH linked reduction of 3-dehydroshikimate (DHSA) to yield shikimate (SA). In Acinetobacter baumannii (strain SDF), this protein is Shikimate dehydrogenase (NADP(+)).